A 38-amino-acid chain; its full sequence is Large ribosomal subunit protein bL36 (38 aa).

This sequence belongs to the bacterial ribosomal protein bL36 family.

The polypeptide is Large ribosomal subunit protein bL36 (Kosmotoga olearia (strain ATCC BAA-1733 / DSM 21960 / TBF 19.5.1)).